Reading from the N-terminus, the 197-residue chain is Adenylate kinase (197 aa).

7–15 (ALPGSGKTT) contacts ATP.

The protein belongs to the archaeal adenylate kinase family.

The protein resides in the cytoplasm. It catalyses the reaction AMP + ATP = 2 ADP. The sequence is that of Adenylate kinase (adkA) from Pyrobaculum aerophilum (strain ATCC 51768 / DSM 7523 / JCM 9630 / CIP 104966 / NBRC 100827 / IM2).